Here is a 365-residue protein sequence, read N- to C-terminus: Peptide chain release factor 2 (365 aa).

At Gln252 the chain carries N5-methylglutamine.

This sequence belongs to the prokaryotic/mitochondrial release factor family. Post-translationally, methylated by PrmC. Methylation increases the termination efficiency of RF2.

Its subcellular location is the cytoplasm. Functionally, peptide chain release factor 2 directs the termination of translation in response to the peptide chain termination codons UGA and UAA. This is Peptide chain release factor 2 from Aliivibrio fischeri (strain ATCC 700601 / ES114) (Vibrio fischeri).